Here is a 168-residue protein sequence, read N- to C-terminus: Small ribosomal subunit protein uS5 (168 aa).

An S5 DRBM domain is found at 11 to 74 (YSEKVVKIDR…ESAKKHLVKI (64 aa)).

Belongs to the universal ribosomal protein uS5 family. In terms of assembly, part of the 30S ribosomal subunit. Contacts proteins S4 and S8.

Functionally, with S4 and S12 plays an important role in translational accuracy. Located at the back of the 30S subunit body where it stabilizes the conformation of the head with respect to the body. This Leptospira interrogans serogroup Icterohaemorrhagiae serovar copenhageni (strain Fiocruz L1-130) protein is Small ribosomal subunit protein uS5.